We begin with the raw amino-acid sequence, 80 residues long: Large ribosomal subunit protein bL31B (80 aa).

This sequence belongs to the bacterial ribosomal protein bL31 family. Type B subfamily. In terms of assembly, part of the 50S ribosomal subunit.

In Stenotrophomonas maltophilia (strain K279a), this protein is Large ribosomal subunit protein bL31B.